Here is a 190-residue protein sequence, read N- to C-terminus: UPF0301 protein Rpic_0619 (190 aa).

It belongs to the UPF0301 (AlgH) family.

The sequence is that of UPF0301 protein Rpic_0619 from Ralstonia pickettii (strain 12J).